The primary structure comprises 1048 residues: Anguibactin system regulator (1048 aa).

Residues 965 to 1039 (PIITASEDRV…AFAIIMDRCR (75 aa)) form the Carrier domain.

The protein belongs to the ATP-dependent AMP-binding enzyme family.

The protein operates within siderophore biosynthesis; anguibactin biosynthesis. Bifunctional protein that plays an essential role in virulence. Plays a role in both production of the siderophore anguibactin and regulation of iron transport genes. In Vibrio anguillarum (strain ATCC 68554 / 775) (Listonella anguillarum), this protein is Anguibactin system regulator (angR).